A 457-amino-acid chain; its full sequence is 11S globulin seed storage protein Ana o 2.0101 (457 aa).

The first 14 residues, 1 to 14, serve as a signal peptide directing secretion; sequence LSVCFLILFHGCLA. Residues 15–29 form an igE-binding region; that stretch reads SRQEWQQQDECQIDR. 2 disulfide bridges follow: cysteine 25–cysteine 58 and cysteine 101–cysteine 278. Conformational epitope; mouse monoclonal antibody (mAb) 2B5-binding regions lie at residues 29-37 and 31-48; these read RLDALEPDN and DALE…TVEA. One can recognise a Cupin type-1 1 domain in the interval 30 to 220; the sequence is LDALEPDNRV…AFQVDERLIK (191 aa). 2 binds goat polyclonal antibodies (pAbs) regions span residues 32–45 and 55–86; these read ALEP…EAGT and QFRC…QLIY. The tract at residues 34-57 is mouse monoclonal antibody (mAb) 2B5-binding; the sequence is EPDNRVEYEAGTVEAWDPNHEQFR. The tract at residues 41–55 is mouse monoclonal antibody (mAb) 4H9-binding; sequence YEAGTVEAWDPNHEQ. An igE-binding region spans residues 105–119; that stretch reads YQAPQQGRQQGQSGR. Residues 215 to 239 are binds goat polyclonal antibodies (pAbs); sequence DERLIKQLKSEDNRGGIVKVKDDEL. The tract at residues 233 to 252 is CD4(+) T cell-reactive epitope; the sequence is KVKDDELRVIRPSRSQSERG. The segment at 243–270 is disordered; it reads RPSRSQSERGSESEEESEDEKRRWGQRD. The segment covering 261-270 has biased composition (basic and acidic residues); the sequence is DEKRRWGQRD. The tract at residues 265-289 is linear epitope; mouse monoclonal antibody (mAb) 1F5-binding; it reads RWGQRDNGIEETICTMRLKENINDP. The NGXEET; peptidase recognition motif signature appears at 271-276; sequence NGIEET. The region spanning 284-433 is the Cupin type-1 2 domain; the sequence is ENINDPARAD…AFQISREDAR (150 aa). CD4(+) T cell-reactive epitope stretches follow at residues 289–308, 297–316, 321–340, 329–348, and 377–396; these read PARA…LNSL, PEVG…LKWL, EKGV…LNSH, ALVL…GCKG, and QNFA…ISFK. Residues 395-416 form a binds goat polyclonal antibodies (pAbs), but buried in the 3D-structure model region; the sequence is FKTNDRAMTSPLAGRTSVLGGM.

It belongs to the 11S seed storage protein (globulins) family. In terms of assembly, homotrimer. Hexamer. Each subunit is composed of an acidic and a basic chain derived from a single precursor and linked by a disulfide bond. Post-translationally, proteolytically processed from a single precursor to produce an acidic and a basic chain that are linked by a disulfide bond. Not glycosylated. Expressed in seed (at protein level). Expressed in the juice of the cashew apple (at protein level).

Its function is as follows. Seed storage protein. The chain is 11S globulin seed storage protein Ana o 2.0101 from Anacardium occidentale (Cashew).